Here is a 313-residue protein sequence, read N- to C-terminus: Inner membrane ABC transporter permease protein YdcU (313 aa).

The Cytoplasmic portion of the chain corresponds to 1-25 (MAMNVLQSPSRPGLGKVSGFFWHNP). The chain crosses the membrane as a helical span at residues 26–46 (GLGLFLLLLGPLMWFGIVYFG). The Periplasmic segment spans residues 47-92 (SLLTLLWQGFYTFDDFTMSVTPELTLANIRALFNPANYDIILRTLT). The ABC transmembrane type-1 domain maps to 87–302 (ILRTLTMAVA…PIILIALYLA (216 aa)). The chain crosses the membrane as a helical span at residues 93 to 113 (MAVAVTIASAILAFPMAWYMA). The Cytoplasmic segment spans residues 114–122 (RYTSGKMKA). A helical membrane pass occupies residues 123-143 (FFYIAVMLPMWASYIVKAYAW). At 144-154 (TLLLAKDGVAQ) the chain is on the periplasmic side. Residues 155-175 (WFLQHLGLEPLLTAFLTLPAV) form a helical membrane-spanning segment. Residues 176–187 (GGNTLSTSGLGR) are Cytoplasmic-facing. The chain crosses the membrane as a helical span at residues 188-208 (FLVFLYIWLPFMILPVQAALE). Residues 209–230 (RLPPSLLQASADLGARPRQTFR) are Periplasmic-facing. Residues 231-251 (YVVLPLAIPGIAAGSIFTFSL) form a helical membrane-spanning segment. Residue threonine 252 is a topological domain, cytoplasmic. A helical transmembrane segment spans residues 253–273 (LGDFIVPQLVGPPGYFIGNMV). Over 274 to 283 (YSQQGAIGNM) the chain is Periplasmic. The helical transmembrane segment at 284-304 (PMAAAFTLVPIILIALYLAFV) threads the bilayer. Topologically, residues 305–313 (KRLGAFDAL) are cytoplasmic.

The protein belongs to the binding-protein-dependent transport system permease family. CysTW subfamily.

The protein localises to the cell inner membrane. Its function is as follows. Probably part of the ABC transporter complex YdcSTUV. Probably responsible for the translocation of the substrate across the membrane. The polypeptide is Inner membrane ABC transporter permease protein YdcU (ydcU) (Escherichia coli (strain K12)).